A 361-amino-acid polypeptide reads, in one-letter code: Beta-hexosaminidase (361 aa).

Residues D69, R77, R144, and K174–H175 contribute to the substrate site. The active-site Proton donor/acceptor is the H187. D258 acts as the Nucleophile in catalysis.

Belongs to the glycosyl hydrolase 3 family. NagZ subfamily.

The protein resides in the cytoplasm. The catalysed reaction is Hydrolysis of terminal non-reducing N-acetyl-D-hexosamine residues in N-acetyl-beta-D-hexosaminides.. The protein operates within cell wall biogenesis; peptidoglycan recycling. In terms of biological role, plays a role in peptidoglycan recycling by cleaving the terminal beta-1,4-linked N-acetylglucosamine (GlcNAc) from peptide-linked peptidoglycan fragments, giving rise to free GlcNAc, anhydro-N-acetylmuramic acid and anhydro-N-acetylmuramic acid-linked peptides. The polypeptide is Beta-hexosaminidase (Neisseria meningitidis serogroup A / serotype 4A (strain DSM 15465 / Z2491)).